A 465-amino-acid polypeptide reads, in one-letter code: MLIYDTKLKQKVPFEPLAPKKANIYVCGPTVYDDAHLGHARSAIAFDLLRRTLELSGYEVVLVRNFTDIDDKIINKAFKENKSIQELSSIYIESYTRDLNALNVKKPSLEPKASEYLDAMVSMIETLLEKNIAYKVSNGDIYLDTSKDKDYGSLSVHNSSIEFGRIGLVQEKRLEQDFVLWKSYKGDNDVGFDSPLGKGRPGWHIECSSMVFKTLALANTPYQIDIHAGGVDLLFPHHENEACQTRCAFGVEIAKYWMHNGFVNINNEKMSKSLGNSFFVKDALKNYDGEILRNYLLGVHYRSVLNFNEEDLLVSKKRLDKIYRLKQRVLGSLGNIDLNFKKEILECMQDDLNISKALSVLESMLSSMNEKLDQNPKNKALKGEILANLKFVEELLGIGFKNPTEYFQLGVKESEKQEIEKKIEERKRAKEQKDFIKADSIREELLNHKIALMDTPQGTTWEKLF.

Cys27 provides a ligand contact to Zn(2+). The 'HIGH' region motif lies at 29–39 (PTVYDDAHLGH). 3 residues coordinate Zn(2+): Cys207, His237, and Glu241. The short motif at 269–273 (KMSKS) is the 'KMSKS' region element. Lys272 contributes to the ATP binding site.

Belongs to the class-I aminoacyl-tRNA synthetase family. In terms of assembly, monomer. Requires Zn(2+) as cofactor.

The protein localises to the cytoplasm. It carries out the reaction tRNA(Cys) + L-cysteine + ATP = L-cysteinyl-tRNA(Cys) + AMP + diphosphate. The chain is Cysteine--tRNA ligase from Helicobacter acinonychis (strain Sheeba).